We begin with the raw amino-acid sequence, 484 residues long: UDP-N-acetylmuramoyl-L-alanyl-D-glutamate--2,6-diaminopimelate ligase (484 aa).

Residue 110-116 (GTNGKTT) coordinates ATP. UDP-N-acetyl-alpha-D-muramoyl-L-alanyl-D-glutamate-binding positions include 152-153 (TT), Ser-179, and Arg-187. An N6-carboxylysine modification is found at Lys-219. Meso-2,6-diaminopimelate contacts are provided by residues Arg-381, 405-408 (DNPR), Gly-455, and Glu-459. Positions 405 to 408 (DNPR) match the Meso-diaminopimelate recognition motif motif.

Belongs to the MurCDEF family. MurE subfamily. Mg(2+) is required as a cofactor. Post-translationally, carboxylation is probably crucial for Mg(2+) binding and, consequently, for the gamma-phosphate positioning of ATP.

It is found in the cytoplasm. It carries out the reaction UDP-N-acetyl-alpha-D-muramoyl-L-alanyl-D-glutamate + meso-2,6-diaminopimelate + ATP = UDP-N-acetyl-alpha-D-muramoyl-L-alanyl-gamma-D-glutamyl-meso-2,6-diaminopimelate + ADP + phosphate + H(+). It functions in the pathway cell wall biogenesis; peptidoglycan biosynthesis. In terms of biological role, catalyzes the addition of meso-diaminopimelic acid to the nucleotide precursor UDP-N-acetylmuramoyl-L-alanyl-D-glutamate (UMAG) in the biosynthesis of bacterial cell-wall peptidoglycan. This is UDP-N-acetylmuramoyl-L-alanyl-D-glutamate--2,6-diaminopimelate ligase from Clostridium perfringens (strain 13 / Type A).